Consider the following 104-residue polypeptide: Small ribosomal subunit protein bS18c (104 aa).

Belongs to the bacterial ribosomal protein bS18 family. In terms of assembly, part of the 30S ribosomal subunit.

Its subcellular location is the plastid. It localises to the chloroplast. The sequence is that of Small ribosomal subunit protein bS18c from Lotus japonicus (Lotus corniculatus var. japonicus).